Reading from the N-terminus, the 700-residue chain is Protein kinase C, eye isozyme (700 aa).

2 Phorbol-ester/DAG-type zinc fingers span residues 71–121 (GHRF…VFKC) and 136–186 (KHGW…PPMC). One can recognise a C2 domain in the interval 189–310 (DISEVRGKLL…LQKEPVDGWY (122 aa)). Residues D222, D228, D281, D283, S286, and D289 each contribute to the Ca(2+) site. The region spanning 371 to 629 (FNFVKVIGKG…RQEITTHPFF (259 aa)) is the Protein kinase domain. ATP-binding positions include 377–385 (IGKGSFGKV) and K400. Residue D495 is the Proton acceptor of the active site. In terms of domain architecture, AGC-kinase C-terminal spans 630-700 (RNVDWDKAEA…FMNPEFITII (71 aa)).

Belongs to the protein kinase superfamily. AGC Ser/Thr protein kinase family. PKC subfamily. Ca(2+) is required as a cofactor. In terms of tissue distribution, exclusively expressed in photoreceptor cells.

It catalyses the reaction L-seryl-[protein] + ATP = O-phospho-L-seryl-[protein] + ADP + H(+). The enzyme catalyses L-threonyl-[protein] + ATP = O-phospho-L-threonyl-[protein] + ADP + H(+). Its function is as follows. This is a calcium-activated, phospholipid-dependent, serine- and threonine-specific enzyme. This isozyme is a negative regulator of the visual transduction cascade and has been shown to be required for photoreceptor cell inactivation and light adaptation. Negative regulation is dependent on interaction with scaffolding protein inaD. Acts in a hh-signaling pathway which regulates the Duox-dependent gut immune response to bacterial uracil; required for the activation of Cad99C and consequently Cad99C-dependent endosome formation, which is essential for the Duox-dependent production of reactive oxygen species (ROS) in response to intestinal bacterial infection. The sequence is that of Protein kinase C, eye isozyme (inaC) from Drosophila melanogaster (Fruit fly).